We begin with the raw amino-acid sequence, 335 residues long: GTPase Obg (335 aa).

In terms of domain architecture, Obg spans 1-159 (MQFIDRSEIE…RKLLLELKLL (159 aa)). The 169-residue stretch at 160–328 (AEVGIIGLPN…LLARVWQVLE (169 aa)) folds into the OBG-type G domain. Residues 166–173 (GLPNAGKS), 191–195 (FTTLV), 213–216 (DIPG), 280–283 (NKAD), and 309–311 (SAA) contribute to the GTP site. Mg(2+)-binding residues include S173 and T193.

Belongs to the TRAFAC class OBG-HflX-like GTPase superfamily. OBG GTPase family. In terms of assembly, monomer. Mg(2+) serves as cofactor.

The protein resides in the cytoplasm. Functionally, an essential GTPase which binds GTP, GDP and possibly (p)ppGpp with moderate affinity, with high nucleotide exchange rates and a fairly low GTP hydrolysis rate. Plays a role in control of the cell cycle, stress response, ribosome biogenesis and in those bacteria that undergo differentiation, in morphogenesis control. In Gloeobacter violaceus (strain ATCC 29082 / PCC 7421), this protein is GTPase Obg.